The primary structure comprises 254 residues: 14-3-3-like protein GF14 epsilon (254 aa).

Residues Ser65 and Ser188 each carry the phosphoserine modification.

It belongs to the 14-3-3 family. As to quaternary structure, interacts with DREB1A and DREB1B in the nucleus. Interacts with CINV1.

It localises to the nucleus. The protein resides in the cytoplasm. In terms of biological role, is associated with a DNA binding complex that binds to the G box, a well-characterized cis-acting DNA regulatory element found in plant genes. The sequence is that of 14-3-3-like protein GF14 epsilon (GRF10) from Arabidopsis thaliana (Mouse-ear cress).